Reading from the N-terminus, the 100-residue chain is Transcription and mRNA export factor SUS1 (100 aa).

It belongs to the ENY2 family. As to quaternary structure, component of the nuclear pore complex (NPC)-associated TREX-2 complex (transcription and export complex 2), composed of at least SUS1, SAC3, THP1, SEM1, and CDC31. TREX-2 contains 2 SUS1 chains. The TREX-2 complex interacts with the nucleoporin NUP1. Component of the 1.8 MDa SAGA transcription coactivator-HAT complex. SAGA is built of 5 distinct domains with specialized functions. Within the SAGA complex, SUS1, SGF11, SGF73 and UBP8 form an additional subcomplex of SAGA called the DUB module (deubiquitination module). Interacts directly with THP1, SAC3, SGF11, and with the RNA polymerase II.

It localises to the nucleus. It is found in the nucleoplasm. The protein resides in the cytoplasm. The protein localises to the P-body. Its function is as follows. Involved in mRNA export coupled transcription activation by association with both the TREX-2 and the SAGA complexes. At the promoters, SAGA is required for recruitment of the basal transcription machinery. It influences RNA polymerase II transcriptional activity through different activities such as TBP interaction and promoter selectivity, interaction with transcription activators, and chromatin modification through histone acetylation and deubiquitination. Within the SAGA complex, participates in a subcomplex required for deubiquitination of H2B and for the maintenance of steady-state H3 methylation levels. The TREX-2 complex functions in docking export-competent ribonucleoprotein particles (mRNPs) to the nuclear entrance of the nuclear pore complex (nuclear basket). TREX-2 participates in mRNA export and accurate chromatin positioning in the nucleus by tethering genes to the nuclear periphery. May also be involved in cytoplasmic mRNA decay by interaction with components of P-bodies. The polypeptide is Transcription and mRNA export factor SUS1 (Candida glabrata (strain ATCC 2001 / BCRC 20586 / JCM 3761 / NBRC 0622 / NRRL Y-65 / CBS 138) (Yeast)).